We begin with the raw amino-acid sequence, 90 residues long: Molybdopterin synthase sulfur carrier subunit (90 aa).

Glycine 90 carries the 1-thioglycine; alternate modification. The residue at position 90 (glycine 90) is a Glycyl adenylate; alternate.

The protein belongs to the MoaD family. MOCS2A subfamily. As to quaternary structure, heterotetramer; composed of 2 small (Mocs2A) and 2 large (Mocs2B) subunits. In terms of processing, C-terminal thiocarboxylation occurs in 2 steps, it is first acyl-adenylated (-COAMP) via the hesA/moeB/thiF part of MOCS3, then thiocarboxylated (-COSH) via the rhodanese domain of MOCS3.

The protein resides in the cytoplasm. The protein operates within cofactor biosynthesis; molybdopterin biosynthesis. Its function is as follows. Acts as a sulfur carrier required for molybdopterin biosynthesis. Component of the molybdopterin synthase complex that catalyzes the conversion of precursor Z into molybdopterin by mediating the incorporation of 2 sulfur atoms into precursor Z to generate a dithiolene group. In the complex, serves as sulfur donor by being thiocarboxylated (-COSH) at its C-terminus by MOCS3. After interaction with Mocs2B, the sulfur is then transferred to precursor Z to form molybdopterin. The protein is Molybdopterin synthase sulfur carrier subunit of Drosophila erecta (Fruit fly).